The following is a 438-amino-acid chain: Xylose isomerase (438 aa).

Residues His-103 and Asp-106 contribute to the active site. Positions 234, 270, 273, 298, 309, 311, and 341 each coordinate Mg(2+).

This sequence belongs to the xylose isomerase family. In terms of assembly, homotetramer. Mg(2+) is required as a cofactor.

The protein resides in the cytoplasm. The catalysed reaction is alpha-D-xylose = alpha-D-xylulofuranose. The protein is Xylose isomerase of Bacteroides thetaiotaomicron (strain ATCC 29148 / DSM 2079 / JCM 5827 / CCUG 10774 / NCTC 10582 / VPI-5482 / E50).